The following is a 338-amino-acid chain: Holliday junction branch migration complex subunit RuvB (338 aa).

The segment at 1–22 (MIEADRLIHAEPQGPEERDEQI) is disordered. Positions 4 to 187 (ADRLIHAEPQ…FGIPLRLEFY (184 aa)) are large ATPase domain (RuvB-L). ATP contacts are provided by residues R27, G68, K71, T72, T73, 134–136 (EDY), R177, Y187, and R224. T72 is a binding site for Mg(2+). A small ATPAse domain (RuvB-S) region spans residues 188-258 (NTKDLSSIVS…VADLALDMLD (71 aa)). The segment at 261–338 (SEGFDYMDRK…RHFDIIQPEK (78 aa)) is head domain (RuvB-H). Residues R297, R316, and R321 each coordinate DNA.

Belongs to the RuvB family. Homohexamer. Forms an RuvA(8)-RuvB(12)-Holliday junction (HJ) complex. HJ DNA is sandwiched between 2 RuvA tetramers; dsDNA enters through RuvA and exits via RuvB. An RuvB hexamer assembles on each DNA strand where it exits the tetramer. Each RuvB hexamer is contacted by two RuvA subunits (via domain III) on 2 adjacent RuvB subunits; this complex drives branch migration. In the full resolvosome a probable DNA-RuvA(4)-RuvB(12)-RuvC(2) complex forms which resolves the HJ.

Its subcellular location is the cytoplasm. It catalyses the reaction ATP + H2O = ADP + phosphate + H(+). In terms of biological role, the RuvA-RuvB-RuvC complex processes Holliday junction (HJ) DNA during genetic recombination and DNA repair, while the RuvA-RuvB complex plays an important role in the rescue of blocked DNA replication forks via replication fork reversal (RFR). RuvA specifically binds to HJ cruciform DNA, conferring on it an open structure. The RuvB hexamer acts as an ATP-dependent pump, pulling dsDNA into and through the RuvAB complex. RuvB forms 2 homohexamers on either side of HJ DNA bound by 1 or 2 RuvA tetramers; 4 subunits per hexamer contact DNA at a time. Coordinated motions by a converter formed by DNA-disengaged RuvB subunits stimulates ATP hydrolysis and nucleotide exchange. Immobilization of the converter enables RuvB to convert the ATP-contained energy into a lever motion, pulling 2 nucleotides of DNA out of the RuvA tetramer per ATP hydrolyzed, thus driving DNA branch migration. The RuvB motors rotate together with the DNA substrate, which together with the progressing nucleotide cycle form the mechanistic basis for DNA recombination by continuous HJ branch migration. Branch migration allows RuvC to scan DNA until it finds its consensus sequence, where it cleaves and resolves cruciform DNA. The sequence is that of Holliday junction branch migration complex subunit RuvB from Shewanella sediminis (strain HAW-EB3).